The chain runs to 311 residues: tRNA-cytidine(32) 2-sulfurtransferase (311 aa).

The PP-loop motif signature appears at 47 to 52 (SGGKDS). The [4Fe-4S] cluster site is built by Cys122, Cys125, and Cys213.

It belongs to the TtcA family. As to quaternary structure, homodimer. Requires Mg(2+) as cofactor. [4Fe-4S] cluster serves as cofactor.

Its subcellular location is the cytoplasm. The catalysed reaction is cytidine(32) in tRNA + S-sulfanyl-L-cysteinyl-[cysteine desulfurase] + AH2 + ATP = 2-thiocytidine(32) in tRNA + L-cysteinyl-[cysteine desulfurase] + A + AMP + diphosphate + H(+). It participates in tRNA modification. Catalyzes the ATP-dependent 2-thiolation of cytidine in position 32 of tRNA, to form 2-thiocytidine (s(2)C32). The sulfur atoms are provided by the cysteine/cysteine desulfurase (IscS) system. This chain is tRNA-cytidine(32) 2-sulfurtransferase, found in Enterobacter sp. (strain 638).